Reading from the N-terminus, the 218-residue chain is ATP phosphoribosyltransferase (218 aa).

Belongs to the ATP phosphoribosyltransferase family. Short subfamily. As to quaternary structure, heteromultimer composed of HisG and HisZ subunits.

It localises to the cytoplasm. It catalyses the reaction 1-(5-phospho-beta-D-ribosyl)-ATP + diphosphate = 5-phospho-alpha-D-ribose 1-diphosphate + ATP. Its pathway is amino-acid biosynthesis; L-histidine biosynthesis; L-histidine from 5-phospho-alpha-D-ribose 1-diphosphate: step 1/9. Catalyzes the condensation of ATP and 5-phosphoribose 1-diphosphate to form N'-(5'-phosphoribosyl)-ATP (PR-ATP). Has a crucial role in the pathway because the rate of histidine biosynthesis seems to be controlled primarily by regulation of HisG enzymatic activity. In Trichormus variabilis (strain ATCC 29413 / PCC 7937) (Anabaena variabilis), this protein is ATP phosphoribosyltransferase.